The sequence spans 20 residues: Pregnancy-associated glycoprotein 60H (20 aa).

N-linked (GlcNAc...) asparagine glycosylation occurs at N4.

Belongs to the peptidase A1 family. In terms of tissue distribution, chorionic epithelium (trophectoderm) and placental cotyledons.

The protein resides in the secreted. Its subcellular location is the extracellular space. This is Pregnancy-associated glycoprotein 60H from Bison bonasus (European bison).